A 723-amino-acid polypeptide reads, in one-letter code: Tripartite motif-containing protein 42 (723 aa).

Residues 146–192 form an RING-type zinc finger; the sequence is CPMCSRLRLHSFMLPCNHSLCEKCLRQLQKHAEVTENFFILICPVCD. 2 consecutive B box-type zinc fingers follow at residues 235–280 and 285–326; these read PILC…FVDT and QDEK…TISL. Residues C290, H293, C313, and H318 each contribute to the Zn(2+) site. A coiled-coil region spans residues 382-407; sequence KLRSILQEKEKIIMEQIENLEVSRQK. The COS domain maps to 434–492; it reads LKETGQVAFLQSAKILVDQIEDGIQTTYRPDPQLRLHSINYVPLDFVELSSAIHELFPT. One can recognise a Fibronectin type-III domain in the interval 603–701; it reads TPGPIVIYQT…DICKVVTPDG (99 aa).

It belongs to the TRIM/RBCC family.

This is Tripartite motif-containing protein 42 (TRIM42) from Homo sapiens (Human).